The following is a 297-amino-acid chain: Heme A synthase (297 aa).

The Cytoplasmic segment spans residues 1 to 6 (MHKRLK). A helical transmembrane segment spans residues 7 to 27 (IYSVITSIGVLIVLLQGALVT). Over 28–62 (KTGSGEGCGATWPLCFGEVIPTNPAIETIIEYSHR) the chain is Extracellular. Cys35 and Cys42 form a disulfide bridge. Glu58 is a catalytic residue. Residue His61 participates in heme o binding. The chain crosses the membrane as a helical span at residues 63–83 (IVSGLVGAMIIILAIWAWKQL). The Cytoplasmic segment spans residues 84 to 93 (KHMREAKALS). The helical transmembrane segment at 94 to 114 (FAAVILIIFQGLLGAGAVVFG) threads the bilayer. Over 115–118 (QSKA) the chain is Extracellular. Residues 119–139 (ILALHFGISAMSLAAVVLLTI) traverse the membrane as a helical segment. His123 contributes to the heme o binding site. The Cytoplasmic segment spans residues 140 to 156 (LAFEDGREHTMAPKVSR). Residues 157 to 177 (GFKYYVFFVITYCYAVIYSGA) traverse the membrane as a helical segment. The Extracellular segment spans residues 178–210 (YVKHSEATLACAGFPLCNGQIFPGLYGPVGAHY). Cys188 and Cys194 are joined by a disulfide. The chain crosses the membrane as a helical span at residues 211–231 (FHRVVGTILLLFLLILMIWTL). Heme b is bound at residue His212. The Cytoplasmic segment spans residues 232–242 (SRYRHYRVLTW). A helical membrane pass occupies residues 243–263 (TAVLSFLLVVGQFISGISIVF). Residues 264-271 (TQNALSVG) are Extracellular-facing. The chain crosses the membrane as a helical span at residues 272–292 (LIHALIISILFSALSYMTMII). Heme b is bound at residue His274. Residues 293–297 (TRPSH) are Cytoplasmic-facing.

This sequence belongs to the COX15/CtaA family. Type 1 subfamily. Interacts with CtaB. The cofactor is heme b.

It localises to the cell membrane. It carries out the reaction Fe(II)-heme o + 2 A + H2O = Fe(II)-heme a + 2 AH2. It participates in porphyrin-containing compound metabolism; heme A biosynthesis; heme A from heme O: step 1/1. Functionally, catalyzes the conversion of heme O to heme A by two successive hydroxylations of the methyl group at C8. The first hydroxylation forms heme I, the second hydroxylation results in an unstable dihydroxymethyl group, which spontaneously dehydrates, resulting in the formyl group of heme A. This is Heme A synthase from Alkalihalophilus pseudofirmus (strain ATCC BAA-2126 / JCM 17055 / OF4) (Bacillus pseudofirmus).